Here is a 463-residue protein sequence, read N- to C-terminus: Tryprostatin B synthase (463 aa).

Brevianamide F-binding residues include Met93 and Glu101. Residues Arg112, Lys200, and Tyr202 each contribute to the dimethylallyl diphosphate site. Tyr204 is a binding site for brevianamide F. Residues Lys293, Tyr295, Gln379, Tyr381, Tyr445, and Tyr449 each coordinate dimethylallyl diphosphate.

It belongs to the tryptophan dimethylallyltransferase family.

It catalyses the reaction brevianamide F + dimethylallyl diphosphate = tryprostatin B + diphosphate. The protein operates within mycotoxin biosynthesis. In terms of biological role, brevianamide F prenyltransferase; part of the gene cluster that mediates the biosynthesis of fumitremorgins, indole alkaloids that carry not only intriguing chemical structures, but also interesting biological and pharmacological activities. The biosynthesis of fumitremorgin-type alkaloids begins by condensation of the two amino acids L-tryptophan and L-proline to brevianamide F, catalyzed by the non-ribosomal peptide synthetase ftmPS/ftmA. Brevianamide F is then prenylated by the prenyltransferase ftmPT1/ftmB in the presence of dimethylallyl diphosphate, resulting in the formation of tryprostatin B. The three cytochrome P450 monooxygenases, ftmP450-1/ftmC, ftmP450-2/ftmE and ftmP450-3/FtmG, are responsible for the conversion of tryprostatin B to 6-hydroxytryprostatin B, tryprostatin A to fumitremorgin C and fumitremorgin C to 12,13-dihydroxyfumitremorgin C, respectively. The putative methyltransferase ftmMT/ftmD is expected for the conversion of 6-hydroxytryprostatin B to tryprostatin A. FtmPT2/FtmH catalyzes the prenylation of 12,13-dihydroxyfumitre-morgin C in the presence of dimethylallyl diphosphate, resulting in the formation of fumitremorgin B. Fumitremorgin B is further converted to verruculogen by ftmOx1/ftmF via the insertion of an endoperoxide bond between the two prenyl moieties. Finally, verruculogen is further converted to fumitremorgin A by the verruculogen prenyltransferase ftmPT3. The protein is Tryprostatin B synthase of Neosartorya fischeri (strain ATCC 1020 / DSM 3700 / CBS 544.65 / FGSC A1164 / JCM 1740 / NRRL 181 / WB 181) (Aspergillus fischerianus).